Reading from the N-terminus, the 477-residue chain is FAD-dependent monooxygenase paxM (477 aa).

Residues 4 to 24 (AEFQVIIVGGSIGGLTLAHCL) traverse the membrane as a helical segment. Positions 35, 49, and 108 each coordinate FAD. The active site involves R195. The FAD site is built by D308 and A321. A helical membrane pass occupies residues 446 to 466 (LMIYLFGLTIVYTSLTMMFDL).

Belongs to the paxM FAD-dependent monooxygenase family. FAD serves as cofactor.

It localises to the membrane. It participates in secondary metabolite biosynthesis. In terms of biological role, FAD-dependent monooxygenase; part of the gene cluster that mediates the biosynthesis of paxilline, a mycotoxin that acts as an inhibitor of mammalian maxi-K channels. PaxG, the geranylgeranyl diphosphate (GGPP) synthase is proposed to catalyze the first step in paxilline biosynthesis. Condensation of indole-3-glycerol phosphate with GGPP by paxC then forms 3-geranylgeranylindole (3-GGI), followed by epoxidation and cyclization of this intermediate (by paxM and paxB) to form paspaline. Paspaline is subsequently converted to 13-desoxypaxilline by paxP, the latter being then converted to paxilline by paxQ. Finally paxilline can be mono- and di-prenylated by paxD. The polypeptide is FAD-dependent monooxygenase paxM (Penicillium paxilli).